We begin with the raw amino-acid sequence, 91 residues long: Elongation factor 1-beta (91 aa).

Homodimer.

Functionally, promotes the exchange of GDP for GTP in EF-1-alpha/GDP, thus allowing the regeneration of EF-1-alpha/GTP that could then be used to form the ternary complex EF-1-alpha/GTP/AAtRNA. The chain is Elongation factor 1-beta (ef1b) from Saccharolobus solfataricus (strain ATCC 35092 / DSM 1617 / JCM 11322 / P2) (Sulfolobus solfataricus).